The sequence spans 269 residues: Cell cycle regulator CcrZ (269 aa).

ATP is bound by residues Phe-39, His-76, Trp-77, Met-78, and Gly-80. The short motif at 164–171 (HCDVNHNN) is the Brenner's motif [HXDhX3N] element. Asp-166 (proton acceptor) is an active-site residue. An APH motif is present at residues 180 to 203 (LYLIDWDGAMIADPAMDLGPLLYH).

The protein belongs to the aminoglycoside phosphotransferase family. As to quaternary structure, monomer in solution. Interacts with DnaA (via domains I (1-82) and III (111-326)). Interacts with DnaB. Interacts with FtsZ.

The protein resides in the cytoplasm. It carries out the reaction D-ribose + ATP = D-ribose 5-phosphate + ADP + H(+). The catalysed reaction is 2-deoxy-D-ribose + ATP = 2-deoxy-D-ribose 5-phosphate + ADP + H(+). Activated by D-ribose and 2-deoxy-D-ribose. Slightly activated by kanamycin and gentamicin. Functionally, plays a role in cell cycle regulation and chromosome integrity. Activates DnaA-dependent chromosomal DNA replication initiation ensuring that the chromosome is replicated at the right time during the cell cycle. May regulate replication initiation through phosphorylation of a possible second messenger or metabolite, and by interacting with replication initiation proteins. Has ATPase activity with D-ribose and 2-deoxy-D-ribose in vitro, but not with choline. Involved in DNA damage response. The sequence is that of Cell cycle regulator CcrZ from Bacillus subtilis (strain 168).